The following is a 395-amino-acid chain: MENGTGDEQNHTGLLLSSQEFVTAEYQVVTILLVLLICGLGIVGNIMVVLVVLRTKHMRTPTNCYLVSLAVADLMVLVAAGLPNITESLYKSWVYGYVGCLCITYLQYLGINASSFSITAFTIERYIAICHPIKAQFLCTFSRAKKIIIFVWSFASVYCMLWFFLLDLNIAVYKDTTVVSCGYKVSRSYYSPIYMMDFGIFYVLPMVLATVLYGLIARILFLNPIPSDPKENSNTWKNDMAQQNKTVNSKMTNKSFNSTIASRRQVTKMLAVVVVLFAFLWMPYRTLVVVNSFLSSPFQENWFLLFCRICIYLNSAINPVIYNLMSQKFRAAFRKLCNCHLKRDKKPANYSVALNYNVIKESDHFSSEIEDITVTNTYLSSAKTSIGDTCLSSEA.

Residues 1–30 (MENGTGDEQNHTGLLLSSQEFVTAEYQVVT) are Extracellular-facing. N-linked (GlcNAc...) asparagine glycans are attached at residues Asn3 and Asn10. A helical membrane pass occupies residues 31–53 (ILLVLLICGLGIVGNIMVVLVVL). The Cytoplasmic portion of the chain corresponds to 54–63 (RTKHMRTPTN). A helical transmembrane segment spans residues 64-85 (CYLVSLAVADLMVLVAAGLPNI). Residues 86 to 101 (TESLYKSWVYGYVGCL) are Extracellular-facing. A disulfide bridge links Cys100 with Cys181. Residues 102 to 123 (CITYLQYLGINASSFSITAFTI) traverse the membrane as a helical segment. Topologically, residues 124-146 (ERYIAICHPIKAQFLCTFSRAKK) are cytoplasmic. Residues 147–170 (IIIFVWSFASVYCMLWFFLLDLNI) form a helical membrane-spanning segment. The Extracellular portion of the chain corresponds to 171 to 195 (AVYKDTTVVSCGYKVSRSYYSPIYM). Residues 196–217 (MDFGIFYVLPMVLATVLYGLIA) traverse the membrane as a helical segment. The Cytoplasmic portion of the chain corresponds to 218–268 (RILFLNPIPSDPKENSNTWKNDMAQQNKTVNSKMTNKSFNSTIASRRQVTK). A helical membrane pass occupies residues 269–290 (MLAVVVVLFAFLWMPYRTLVVV). The Extracellular segment spans residues 291–298 (NSFLSSPF). A helical transmembrane segment spans residues 299-321 (QENWFLLFCRICIYLNSAINPVI). The Cytoplasmic segment spans residues 322 to 395 (YNLMSQKFRA…IGDTCLSSEA (74 aa)).

It belongs to the G-protein coupled receptor 1 family.

The protein resides in the cell membrane. Receptor for thyrotropin-releasing hormone (TRH). Upon ligand binding, this G-protein-coupled receptor triggers activation of the phosphatidylinositol (IP3)-calcium-protein kinase C (PKC) pathway. This Gallus gallus (Chicken) protein is Thyrotropin-releasing hormone receptor (TRHR).